We begin with the raw amino-acid sequence, 475 residues long: Aspartyl/glutamyl-tRNA(Asn/Gln) amidotransferase subunit B (475 aa).

It belongs to the GatB/GatE family. GatB subfamily. In terms of assembly, heterotrimer of A, B and C subunits.

The catalysed reaction is L-glutamyl-tRNA(Gln) + L-glutamine + ATP + H2O = L-glutaminyl-tRNA(Gln) + L-glutamate + ADP + phosphate + H(+). The enzyme catalyses L-aspartyl-tRNA(Asn) + L-glutamine + ATP + H2O = L-asparaginyl-tRNA(Asn) + L-glutamate + ADP + phosphate + 2 H(+). Allows the formation of correctly charged Asn-tRNA(Asn) or Gln-tRNA(Gln) through the transamidation of misacylated Asp-tRNA(Asn) or Glu-tRNA(Gln) in organisms which lack either or both of asparaginyl-tRNA or glutaminyl-tRNA synthetases. The reaction takes place in the presence of glutamine and ATP through an activated phospho-Asp-tRNA(Asn) or phospho-Glu-tRNA(Gln). The sequence is that of Aspartyl/glutamyl-tRNA(Asn/Gln) amidotransferase subunit B from Bacillus cereus (strain ATCC 10987 / NRS 248).